Here is a 142-residue protein sequence, read N- to C-terminus: Large ribosomal subunit protein uL11 (142 aa).

This sequence belongs to the universal ribosomal protein uL11 family. As to quaternary structure, part of the ribosomal stalk of the 50S ribosomal subunit. Interacts with L10 and the large rRNA to form the base of the stalk. L10 forms an elongated spine to which L12 dimers bind in a sequential fashion forming a multimeric L10(L12)X complex. In terms of processing, one or more lysine residues are methylated.

Its function is as follows. Forms part of the ribosomal stalk which helps the ribosome interact with GTP-bound translation factors. This is Large ribosomal subunit protein uL11 from Mesoplasma florum (strain ATCC 33453 / NBRC 100688 / NCTC 11704 / L1) (Acholeplasma florum).